Reading from the N-terminus, the 523-residue chain is Exodeoxyribonuclease 7 large subunit (523 aa).

The segment at 502-523 is disordered; it reads PGASPAARTRAGKAKADQGSLF.

It belongs to the XseA family. Heterooligomer composed of large and small subunits.

The protein localises to the cytoplasm. The catalysed reaction is Exonucleolytic cleavage in either 5'- to 3'- or 3'- to 5'-direction to yield nucleoside 5'-phosphates.. In terms of biological role, bidirectionally degrades single-stranded DNA into large acid-insoluble oligonucleotides, which are then degraded further into small acid-soluble oligonucleotides. The polypeptide is Exodeoxyribonuclease 7 large subunit (Rhodospirillum centenum (strain ATCC 51521 / SW)).